The following is a 478-amino-acid chain: Glutamate--tRNA ligase 1 (478 aa).

A 'HIGH' region motif is present at residues 10 to 20 (PSPTGFLHIGG). The short motif at 242–246 (KLSKR) is the 'KMSKS' region element. An ATP-binding site is contributed by K245.

Belongs to the class-I aminoacyl-tRNA synthetase family. Glutamate--tRNA ligase type 1 subfamily. As to quaternary structure, monomer.

It is found in the cytoplasm. It catalyses the reaction tRNA(Glu) + L-glutamate + ATP = L-glutamyl-tRNA(Glu) + AMP + diphosphate. Functionally, catalyzes the attachment of glutamate to tRNA(Glu) in a two-step reaction: glutamate is first activated by ATP to form Glu-AMP and then transferred to the acceptor end of tRNA(Glu). The protein is Glutamate--tRNA ligase 1 of Orientia tsutsugamushi (strain Boryong) (Rickettsia tsutsugamushi).